Here is a 295-residue protein sequence, read N- to C-terminus: Shikimate dehydrogenase (NADP(+)) (295 aa).

Shikimate-binding positions include S22 to S24 and S69. K73 (proton acceptor) is an active-site residue. The shikimate site is built by N94 and D111. Residues G135–A139 and V236 contribute to the NADP(+) site. Y238 is a binding site for shikimate. G260 serves as a coordination point for NADP(+).

This sequence belongs to the shikimate dehydrogenase family. Homodimer.

The catalysed reaction is shikimate + NADP(+) = 3-dehydroshikimate + NADPH + H(+). It participates in metabolic intermediate biosynthesis; chorismate biosynthesis; chorismate from D-erythrose 4-phosphate and phosphoenolpyruvate: step 4/7. Its function is as follows. Involved in the biosynthesis of the chorismate, which leads to the biosynthesis of aromatic amino acids. Catalyzes the reversible NADPH linked reduction of 3-dehydroshikimate (DHSA) to yield shikimate (SA). The sequence is that of Shikimate dehydrogenase (NADP(+)) from Streptococcus uberis (strain ATCC BAA-854 / 0140J).